The primary structure comprises 401 residues: Adenosine 3'-phospho 5'-phosphosulfate transporter 2 (401 aa).

2 N-linked (GlcNAc...) asparagine glycosylation sites follow: asparagine 12 and asparagine 71. A run of 6 helical transmembrane segments spans residues 78–98 (LTQF…YGYL), 114–134 (YLTL…LQLI), 147–167 (MIIA…LGYL), 170–190 (PTQV…GVFI), 196–216 (NVAD…FTLA), and 223–243 (NFNL…AVIG). The N-linked (GlcNAc...) asparagine glycan is linked to asparagine 254. Transmembrane regions (helical) follow at residues 267–287 (IGFV…PAVT), 298–317 (GYAF…VLAL), 324–346 (LIAV…IFFA), and 349–369 (FTFQ…LNVY).

The protein belongs to the nucleotide-sugar transporter family. SLC35B subfamily. In terms of tissue distribution, preferentially and highly expressed in colon.

It is found in the golgi apparatus membrane. The catalysed reaction is 3'-phosphoadenylyl sulfate(in) + adenosine 3',5'-bisphosphate(out) = 3'-phosphoadenylyl sulfate(out) + adenosine 3',5'-bisphosphate(in). Functionally, probably functions as a 3'-phosphoadenylyl sulfate:adenosine 3',5'-bisphosphate antiporter at the Golgi membranes. Mediates the transport from the cytosol into the lumen of the Golgi of 3'-phosphoadenylyl sulfate/adenosine 3'-phospho 5'-phosphosulfate (PAPS), a universal sulfuryl donor for sulfation events that take place in that compartment. The sequence is that of Adenosine 3'-phospho 5'-phosphosulfate transporter 2 from Homo sapiens (Human).